A 176-amino-acid polypeptide reads, in one-letter code: MGIAVEVRKVYPYPFQHVVNSYLNKYPTPLEKHVLAIKTVEEKTDPASGVVYRKRIATCNNVIPSFLQRFSILKVSNVYLEEESWLDMKTKVMTLKSRCLTWAQYATMKEESVYKESIENSNWTEFTQRGTVTITGAGFLNRVLETFAQTFLNQGVKKSISIMETILRERCGCPFS.

A PRELI/MSF1 domain is found at M1 to F175.

This is PRELI domain-containing protein 2 (prelid2) from Xenopus laevis (African clawed frog).